The following is a 217-amino-acid chain: MDINDISKAVEAVKQSSPQRKFEESVEIAINLKDIDMTNPKNRINEEILLPNGRGKDVKVVIFGSEELKAKAKGVADYIFGPEDISKFAEDKKAFKKIVNDAYFFIAEATLMANIGKSLGQVLGPRGKMPRPIPPGQDPVPLIKALKNTVKARSRNSLTLHVPVGTRSMDTQKISENIMAILNRITGKLERGHSNIKNVYVKTTMGKAVQVGTGDQN.

The protein belongs to the universal ribosomal protein uL1 family. As to quaternary structure, part of the 50S ribosomal subunit.

In terms of biological role, binds directly to 23S rRNA. Probably involved in E site tRNA release. Functionally, protein L1 is also a translational repressor protein, it controls the translation of its operon by binding to its mRNA. This Thermoplasma volcanium (strain ATCC 51530 / DSM 4299 / JCM 9571 / NBRC 15438 / GSS1) protein is Large ribosomal subunit protein uL1.